We begin with the raw amino-acid sequence, 1203 residues long: Plasma membrane calcium-transporting ATPase 4 (1203 aa).

The Cytoplasmic segment spans residues 1 to 92 (MTNPSGHNLP…NMIPPKKPKT (92 aa)). The residue at position 13 (S13) is a Phosphoserine. A helical membrane pass occupies residues 93–113 (FLELVWEALQDVTLIILEIAA). At 114–150 (IISLVLSFYRPPGGENEICGHIVSNPEEDEEGETGWI) the chain is on the extracellular side. The helical transmembrane segment at 151-171 (EGAAILASVIIVVFVTAFNDW) threads the bilayer. Over 172 to 356 (SKEKQFRGLQ…KEKSVLQGKL (185 aa)) the chain is Cytoplasmic. Residues 294 to 319 (DDEKKKKGKKQGVSENRNKAKTQDGV) are disordered. A phosphoserine mark is found at S328 and S334. Residues 330 to 349 (EGLDSEEKEKKASKGPKKEK) are disordered. Residues 334 to 349 (SEEKEKKASKGPKKEK) show a composition bias toward basic and acidic residues. The helical transmembrane segment at 357–376 (TRLAVQIGKAGLIMSILTVL) threads the bilayer. Topologically, residues 377-409 (ILILYFVVDNFVIQRRAWLPECTPVYIQYFVKF) are extracellular. The helical transmembrane segment at 410–427 (FIIGVTVLVVAVPEGLPL) threads the bilayer. Residues 428–840 (AVTISLAYSV…MWGRNVYDSI (413 aa)) are Cytoplasmic-facing. The active-site 4-aspartylphosphate intermediate is D465. Mg(2+) is bound by residues D785 and D789. A helical membrane pass occupies residues 841–860 (SKFLQFQLTVNVVAVIVAFS). Residues 861–870 (GACITQDSPL) lie on the Extracellular side of the membrane. The chain crosses the membrane as a helical span at residues 871–891 (KAVQMLWVNLIMDTFASLALA). The Cytoplasmic segment spans residues 892-911 (TEPPTDSLLRRRPYGRNKPL). A helical membrane pass occupies residues 912–934 (ISRTMMKNILGHAVYQLGIVFLL). Residues 935–952 (VFAGDKLFDIDSGRKAPL) lie on the Extracellular side of the membrane. The helical transmembrane segment at 953–974 (NSPPSQHYTIVFNTFVLMQLFN) threads the bilayer. Residues 975–993 (EINSRKIHGEKNVFAGVYR) lie on the Cytoplasmic side of the membrane. The chain crosses the membrane as a helical span at residues 994–1015 (NIIFCSVVLGTFFCQILIVEVG). Residues 1016–1025 (GKPFSCTNLT) are Extracellular-facing. A helical transmembrane segment spans residues 1026 to 1047 (MEQWMWCLFIGIGELLWGQVIS). Over 1048-1203 (AIPTKSLKFL…SPLQSQETPV (156 aa)) the chain is Cytoplasmic. 2 positions are modified to phosphoserine: S1064 and S1070. The tract at residues 1086-1103 (LRRGQILWVRGLNRIQTQ) is calmodulin-binding subdomain A. Position 1102 is a phosphothreonine; by PKC (T1102). A Phosphoserine modification is found at Q1103. The segment at 1104 to 1113 (IRVVKVFHSF) is calmodulin-binding subdomain B. 4 positions are modified to phosphoserine: R1114, D1115, I1126, and S1144.

The protein belongs to the cation transport ATPase (P-type) (TC 3.A.3) family. Type IIB subfamily. In terms of assembly, interacts with PDZD11. Interacts with SLC35G1 and STIM1. Interacts with calmodulin. Ubiquitously expressed. Not detected in liver. The highest levels are found in uterus and stomach. Isoform XA is found in uterus, brain, stomach, small intestine, colon and pancreas. Isoform XB is found in uterus, skeletal muscle, lung, kidney, spleen, stomach, small intestine and pancreas. Isoform ZA is found in testis and isoform ZB is found in testis and heart.

It localises to the cell membrane. Its subcellular location is the cell projection. The protein localises to the cilium. It is found in the flagellum membrane. It carries out the reaction Ca(2+)(in) + ATP + H2O = Ca(2+)(out) + ADP + phosphate + H(+). With respect to regulation, activated by calcium/calmodulin. Its function is as follows. Calcium/calmodulin-regulated and magnesium-dependent enzyme that catalyzes the hydrolysis of ATP coupled with the transport of calcium out of the cell. By regulating sperm cell calcium homeostasis, may play a role in sperm motility. The protein is Plasma membrane calcium-transporting ATPase 4 of Rattus norvegicus (Rat).